A 239-amino-acid chain; its full sequence is Ribosomal RNA small subunit methyltransferase G (239 aa).

Residues Gly77, Phe82, 128–129, and Arg146 contribute to the S-adenosyl-L-methionine site; that span reads AE. The segment at 215-239 is disordered; sequence DKKRQTPKKYPRKPGTPNKTPLLEK.

It belongs to the methyltransferase superfamily. RNA methyltransferase RsmG family.

Its subcellular location is the cytoplasm. Specifically methylates the N7 position of guanine in position 535 of 16S rRNA. This Staphylococcus aureus (strain USA300) protein is Ribosomal RNA small subunit methyltransferase G.